Here is a 227-residue protein sequence, read N- to C-terminus: Small ribosomal subunit protein uS3 (227 aa).

Residues 38-106 (LRKYLREKLA…EVHLNIVEIR (69 aa)) form the KH type-2 domain.

It belongs to the universal ribosomal protein uS3 family. As to quaternary structure, part of the 30S ribosomal subunit. Forms a tight complex with proteins S10 and S14.

Functionally, binds the lower part of the 30S subunit head. Binds mRNA in the 70S ribosome, positioning it for translation. This Paramagnetospirillum magneticum (strain ATCC 700264 / AMB-1) (Magnetospirillum magneticum) protein is Small ribosomal subunit protein uS3.